A 114-amino-acid polypeptide reads, in one-letter code: MKKKILAFGLISALFCSTPAMADMNRTTKGALLGAGVGLLTGNGVNGVLKGAAVGAGVGAVTEKGRDGKNARKGAKVGAAVGAVTGVLTGNGLEGAIKGAVIGGTGGAILGKMK.

It belongs to the UPF0757 family.

The chain is UPF0757 protein YmgG from Shigella flexneri.